The following is a 278-amino-acid chain: 1-acyl-sn-glycerol-3-phosphate acyltransferase beta (278 aa).

Positions 1-23 are cleaved as a signal peptide; sequence MELWPCLAAALLLLLLLVQLSRA. The Lumenal portion of the chain corresponds to 24-29; sequence AEFYAK. Residues 30-50 form a helical membrane-spanning segment; that stretch reads VALYCALCFTVSAVASLVCLL. The Cytoplasmic segment spans residues 51–121; the sequence is RHGGRTVENM…PERCVQIAKR (71 aa). An HXXXXD motif motif is present at residues 98-103; the sequence is HQSILD. A helical membrane pass occupies residues 122–142; that stretch reads ELLFLGPVGLIMYLGGVFFIN. Residues 143-278 lie on the Lumenal side of the membrane; that stretch reads RQRSSTAMTV…TAGSGVQPAQ (136 aa). The EGTR motif motif lies at 172–175; the sequence is EGTR.

This sequence belongs to the 1-acyl-sn-glycerol-3-phosphate acyltransferase family. Expressed predominantly in adipose tissue, pancreas and liver.

It is found in the endoplasmic reticulum membrane. It catalyses the reaction a 1-acyl-sn-glycero-3-phosphate + an acyl-CoA = a 1,2-diacyl-sn-glycero-3-phosphate + CoA. The catalysed reaction is 1-(9Z-octadecenoyl)-sn-glycero-3-phosphate + (9Z)-octadecenoyl-CoA = 1,2-di-(9Z-octadecenoyl)-sn-glycero-3-phosphate + CoA. It carries out the reaction 1-(9Z-octadecenoyl)-sn-glycero-3-phosphate + hexadecanoyl-CoA = 1-(9Z)-octadecenoyl-2-hexadecanoyl-sn-glycero-3-phosphate + CoA. The enzyme catalyses heptadecanoyl-CoA + 1-(9Z-octadecenoyl)-sn-glycero-3-phosphate = 1-(9Z)-octadecenoyl-2-heptadecanoyl-sn-glycero-3-phosphate + CoA. It catalyses the reaction 1-(9Z-octadecenoyl)-sn-glycero-3-phosphate + (9Z,12Z)-octadecadienoyl-CoA = 1-(9Z)-octadecenoyl-2-(9Z,12Z)-octadecadienoyl-sn-glycero-3-phosphate + CoA. The catalysed reaction is 1-(9Z-octadecenoyl)-sn-glycero-3-phosphate + tetradecanoyl-CoA = 1-(9Z)-octadecenoyl-2-tetradecanoyl-sn-glycero-3-phosphate + CoA. It carries out the reaction pentadecanoyl-CoA + 1-(9Z-octadecenoyl)-sn-glycero-3-phosphate = 1-(9Z)-octadecenoyl-2-pentadecanoyl-sn-glycero-3-phosphate + CoA. The enzyme catalyses 1-hexadecanoyl-sn-glycero-3-phosphate + (9Z)-octadecenoyl-CoA = 1-hexadecanoyl-2-(9Z-octadecenoyl)-sn-glycero-3-phosphate + CoA. It catalyses the reaction 1-tetradecanoyl-sn-glycerol 3-phosphate + (9Z)-octadecenoyl-CoA = 1-tetradecanoyl-2-(9Z)-octadecenoyl-sn-glycero-3-phosphate + CoA. The catalysed reaction is 1-(9Z,12Z,15Z)-octadecatrienoyl-sn-glycero-3-phosphate + (9Z)-octadecenoyl-CoA = 1-(9Z,12Z,15Z)-octadecatrienoyl-2-(9Z)-octadecenoyl-sn-glycero-3-phosphate + CoA. It carries out the reaction 1-(6Z,9Z,12Z-octadecatrienoyl)-sn-glycero-3-phosphate + (9Z)-octadecenoyl-CoA = (6Z,9Z,12Z)-octadecatrienoyl-2-(9Z)-octadecenoyl-sn-glycero-3-phosphate + CoA. The enzyme catalyses 1-eicosanoyl-sn-glycero-3-phosphate + (9Z)-octadecenoyl-CoA = 1-eicosanoyl-2-(9Z)-octadecenoyl-sn-glycero-3-phosphate + CoA. It catalyses the reaction 1-hexadecanoyl-sn-glycero-3-phosphate + octadecanoyl-CoA = 1-hexadecanoyl-2-octadecanoyl-sn-glycero-3-phosphate + CoA. The catalysed reaction is 1-hexadecanoyl-sn-glycero-3-phosphate + (5Z,8Z,11Z,14Z)-eicosatetraenoyl-CoA = 1-hexadecanoyl-2-(5Z,8Z,11Z,14Z-eicosatetraenoyl)-sn-glycero-3-phosphate + CoA. It carries out the reaction 1-hexadecanoyl-sn-glycero-3-phosphate + hexadecanoyl-CoA = 1,2-dihexadecanoyl-sn-glycero-3-phosphate + CoA. The enzyme catalyses 1-hexadecanoyl-sn-glycero-3-phosphate + tetradecanoyl-CoA = 1-hexadecanoyl-2-tetradecanoyl-sn-glycero-3-phosphate + CoA. It catalyses the reaction (11Z)-octadecenoyl-CoA + 1-(9Z-octadecenoyl)-sn-glycero-3-phosphate = 1-(9Z)-octadecenoyl-2-(11Z)-octadecenoyl-sn-glycero-3-phosphate + CoA. It functions in the pathway phospholipid metabolism; CDP-diacylglycerol biosynthesis; CDP-diacylglycerol from sn-glycerol 3-phosphate: step 2/3. In terms of biological role, converts 1-acyl-sn-glycerol-3-phosphate (lysophosphatidic acid or LPA) into 1,2-diacyl-sn-glycerol-3-phosphate (phosphatidic acid or PA) by incorporating an acyl moiety at the sn-2 position of the glycerol backbone. The protein is 1-acyl-sn-glycerol-3-phosphate acyltransferase beta (AGPAT2) of Homo sapiens (Human).